Consider the following 123-residue polypeptide: UPF0102 protein VSAL_I2655 (123 aa).

This sequence belongs to the UPF0102 family.

This is UPF0102 protein VSAL_I2655 from Aliivibrio salmonicida (strain LFI1238) (Vibrio salmonicida (strain LFI1238)).